Reading from the N-terminus, the 872-residue chain is FHIP family protein CBG19667 (872 aa).

The tract at residues 800–841 is disordered; sequence SRSSPRSADEHDSTLFYGRSTIPPPGRKPLLREPSHQETLDD. Residues 829 to 841 are compositionally biased toward basic and acidic residues; sequence LLREPSHQETLDD.

The protein belongs to the FHIP family.

This is FHIP family protein CBG19667 from Caenorhabditis briggsae.